Here is a 304-residue protein sequence, read N- to C-terminus: Mitochondrial glycine transporter (304 aa).

Solcar repeat units lie at residues 25-114 (HPVI…LKQY), 121-205 (PTAL…TKNI), and 215-299 (LIPI…MMAK). 6 consecutive transmembrane segments (helical) span residues 31–56 (FLCGSISGTCSTLLFQPLDLLKTRLQ), 89–115 (GMSPSIVRCVPGVGIYFGTLYSLKQYF), 127–152 (VMLGVGSRSVAGVCMSPITVIKTRYE), 180–203 (GLTATLLRDAPFSGIYLMFYNQTK), 219–245 (TNFSCGIFAGILASLVTQPADVIKTHM), and 274–292 (GGIPRALRRTLMAAMAWTV).

Belongs to the mitochondrial carrier (TC 2.A.29) family. SLC25A38 subfamily. Preferentially expressed in erythroid cells.

The protein localises to the mitochondrion inner membrane. It carries out the reaction glycine(in) = glycine(out). Functionally, mitochondrial glycine transporter that imports glycine into the mitochondrial matrix. Plays an important role in providing glycine for the first enzymatic step in heme biosynthesis, the condensation of glycine with succinyl-CoA to produce 5-aminolevulinate (ALA) in the mitochondrial matrix. Required during erythropoiesis. Its function is as follows. Plays a role as pro-apoptotic protein that induces caspase-dependent apoptosis. The chain is Mitochondrial glycine transporter from Homo sapiens (Human).